Consider the following 415-residue polypeptide: Tyrosine--tRNA ligase (415 aa).

Tyr34 contacts L-tyrosine. Residues 39-48 carry the 'HIGH' region motif; that stretch reads PSADSLHLGN. Residues Tyr162 and Gln166 each coordinate L-tyrosine. Positions 224–228 match the 'KMSKS' region motif; the sequence is KFGKS. Lys227 is an ATP binding site. One can recognise an S4 RNA-binding domain in the interval 346–413; that stretch reads IKIIDLLNLA…KRNYFLILWN (68 aa).

This sequence belongs to the class-I aminoacyl-tRNA synthetase family. TyrS type 1 subfamily. Homodimer.

Its subcellular location is the cytoplasm. The enzyme catalyses tRNA(Tyr) + L-tyrosine + ATP = L-tyrosyl-tRNA(Tyr) + AMP + diphosphate + H(+). Catalyzes the attachment of tyrosine to tRNA(Tyr) in a two-step reaction: tyrosine is first activated by ATP to form Tyr-AMP and then transferred to the acceptor end of tRNA(Tyr). This chain is Tyrosine--tRNA ligase, found in Ureaplasma parvum serovar 3 (strain ATCC 27815 / 27 / NCTC 11736).